The chain runs to 430 residues: Lipoyl synthase, mitochondrial (430 aa).

The transit peptide at 1–37 directs the protein to the mitochondrion; it reads MAASTGKLRTLFSAHSSLSARPSSALPALRLTILRSY. Over residues 40–56 the composition is skewed to low complexity; sequence TTPPDSSISNPSNPSTT. The segment at 40 to 64 is disordered; the sequence is TTPPDSSISNPSNPSTTVKRPPTAF. [4Fe-4S] cluster contacts are provided by C141, C146, C152, C172, C176, C179, and S387. The region spanning 155–376 is the Radical SAM core domain; it reads GSSKSAATAT…KERALEMGFL (222 aa).

This sequence belongs to the radical SAM superfamily. Lipoyl synthase family. [4Fe-4S] cluster serves as cofactor.

The protein resides in the mitochondrion. The enzyme catalyses [[Fe-S] cluster scaffold protein carrying a second [4Fe-4S](2+) cluster] + N(6)-octanoyl-L-lysyl-[protein] + 2 oxidized [2Fe-2S]-[ferredoxin] + 2 S-adenosyl-L-methionine + 4 H(+) = [[Fe-S] cluster scaffold protein] + N(6)-[(R)-dihydrolipoyl]-L-lysyl-[protein] + 4 Fe(3+) + 2 hydrogen sulfide + 2 5'-deoxyadenosine + 2 L-methionine + 2 reduced [2Fe-2S]-[ferredoxin]. It participates in protein modification; protein lipoylation via endogenous pathway; protein N(6)-(lipoyl)lysine from octanoyl-[acyl-carrier-protein]: step 2/2. Functionally, catalyzes the radical-mediated insertion of two sulfur atoms into the C-6 and C-8 positions of the octanoyl moiety bound to the lipoyl domains of lipoate-dependent enzymes, thereby converting the octanoylated domains into lipoylated derivatives. This chain is Lipoyl synthase, mitochondrial, found in Blastomyces gilchristii (strain SLH14081) (Blastomyces dermatitidis).